We begin with the raw amino-acid sequence, 385 residues long: tRNA 2-selenouridine synthase (385 aa).

The region spanning 15-138 is the Rhodanese domain; sequence FIADTPLIDV…ARQFLISTID (124 aa). Cys-98 serves as the catalytic S-selanylcysteine intermediate.

Belongs to the SelU family. As to quaternary structure, monomer.

It catalyses the reaction 5-methylaminomethyl-2-thiouridine(34) in tRNA + selenophosphate + (2E)-geranyl diphosphate + H2O + H(+) = 5-methylaminomethyl-2-selenouridine(34) in tRNA + (2E)-thiogeraniol + phosphate + diphosphate. It carries out the reaction 5-methylaminomethyl-2-thiouridine(34) in tRNA + (2E)-geranyl diphosphate = 5-methylaminomethyl-S-(2E)-geranyl-thiouridine(34) in tRNA + diphosphate. The catalysed reaction is 5-methylaminomethyl-S-(2E)-geranyl-thiouridine(34) in tRNA + selenophosphate + H(+) = 5-methylaminomethyl-2-(Se-phospho)selenouridine(34) in tRNA + (2E)-thiogeraniol. The enzyme catalyses 5-methylaminomethyl-2-(Se-phospho)selenouridine(34) in tRNA + H2O = 5-methylaminomethyl-2-selenouridine(34) in tRNA + phosphate. In terms of biological role, involved in the post-transcriptional modification of the uridine at the wobble position (U34) of tRNA(Lys), tRNA(Glu) and tRNA(Gln). Catalyzes the conversion of 2-thiouridine (S2U-RNA) to 2-selenouridine (Se2U-RNA). Acts in a two-step process involving geranylation of 2-thiouridine (S2U) to S-geranyl-2-thiouridine (geS2U) and subsequent selenation of the latter derivative to 2-selenouridine (Se2U) in the tRNA chain. This chain is tRNA 2-selenouridine synthase, found in Nitrosomonas europaea (strain ATCC 19718 / CIP 103999 / KCTC 2705 / NBRC 14298).